Reading from the N-terminus, the 244-residue chain is 5-oxoprolinase subunit A (244 aa).

The protein belongs to the LamB/PxpA family. Forms a complex composed of PxpA, PxpB and PxpC.

It catalyses the reaction 5-oxo-L-proline + ATP + 2 H2O = L-glutamate + ADP + phosphate + H(+). Its function is as follows. Catalyzes the cleavage of 5-oxoproline to form L-glutamate coupled to the hydrolysis of ATP to ADP and inorganic phosphate. The sequence is that of 5-oxoprolinase subunit A from Salmonella schwarzengrund (strain CVM19633).